Consider the following 274-residue polypeptide: Bis(5'-nucleosyl)-tetraphosphatase, symmetrical (274 aa).

The protein belongs to the Ap4A hydrolase family.

The enzyme catalyses P(1),P(4)-bis(5'-adenosyl) tetraphosphate + H2O = 2 ADP + 2 H(+). Functionally, hydrolyzes diadenosine 5',5'''-P1,P4-tetraphosphate to yield ADP. This is Bis(5'-nucleosyl)-tetraphosphatase, symmetrical from Shewanella sp. (strain W3-18-1).